We begin with the raw amino-acid sequence, 352 residues long: UDP-N-acetylglucosamine--N-acetylmuramyl-(pentapeptide) pyrophosphoryl-undecaprenol N-acetylglucosamine transferase (352 aa).

UDP-N-acetyl-alpha-D-glucosamine is bound by residues 11-13, asparagine 120, arginine 161, serine 188, and glutamine 286; that span reads TGG.

Belongs to the glycosyltransferase 28 family. MurG subfamily.

Its subcellular location is the cell inner membrane. It carries out the reaction di-trans,octa-cis-undecaprenyl diphospho-N-acetyl-alpha-D-muramoyl-L-alanyl-D-glutamyl-meso-2,6-diaminopimeloyl-D-alanyl-D-alanine + UDP-N-acetyl-alpha-D-glucosamine = di-trans,octa-cis-undecaprenyl diphospho-[N-acetyl-alpha-D-glucosaminyl-(1-&gt;4)]-N-acetyl-alpha-D-muramoyl-L-alanyl-D-glutamyl-meso-2,6-diaminopimeloyl-D-alanyl-D-alanine + UDP + H(+). Its pathway is cell wall biogenesis; peptidoglycan biosynthesis. Functionally, cell wall formation. Catalyzes the transfer of a GlcNAc subunit on undecaprenyl-pyrophosphoryl-MurNAc-pentapeptide (lipid intermediate I) to form undecaprenyl-pyrophosphoryl-MurNAc-(pentapeptide)GlcNAc (lipid intermediate II). This Prochlorococcus marinus (strain NATL2A) protein is UDP-N-acetylglucosamine--N-acetylmuramyl-(pentapeptide) pyrophosphoryl-undecaprenol N-acetylglucosamine transferase.